A 216-amino-acid polypeptide reads, in one-letter code: Probable csgAB operon transcriptional regulatory protein (216 aa).

One can recognise an HTH luxR-type domain in the interval 149–214 (NSTESALLTH…QAVSWANDNL (66 aa)). The segment at residues 173–192 (NNEIARSLFISENTVKTHLY) is a DNA-binding region (H-T-H motif).

Its function is as follows. The master regulator for adhesive curli fimbriae expression; necessary for transcription of the csgAB operon. Plays a positive role in biofilm formation. This is Probable csgAB operon transcriptional regulatory protein from Salmonella typhimurium (strain LT2 / SGSC1412 / ATCC 700720).